The chain runs to 151 residues: Small ribosomal subunit protein uS9 (151 aa).

Belongs to the universal ribosomal protein uS9 family.

The sequence is that of Small ribosomal subunit protein uS9 (rps9) from Aeropyrum pernix (strain ATCC 700893 / DSM 11879 / JCM 9820 / NBRC 100138 / K1).